Reading from the N-terminus, the 129-residue chain is Putative transmembrane protein 10 (129 aa).

A run of 3 helical transmembrane segments spans residues 3–23, 27–47, and 85–105; these read NFSY…AFAG, LLVG…LSSL, and SSVL…FFVF.

Its subcellular location is the host membrane. The protein is Putative transmembrane protein 10 (SIFV0010) of Sulfolobus islandicus filamentous virus (isolate Iceland/Hveragerdi) (SIFV).